Here is a 175-residue protein sequence, read N- to C-terminus: Adenine phosphoribosyltransferase (175 aa).

It belongs to the purine/pyrimidine phosphoribosyltransferase family. As to quaternary structure, homodimer.

It localises to the cytoplasm. It carries out the reaction AMP + diphosphate = 5-phospho-alpha-D-ribose 1-diphosphate + adenine. Its pathway is purine metabolism; AMP biosynthesis via salvage pathway; AMP from adenine: step 1/1. In terms of biological role, catalyzes a salvage reaction resulting in the formation of AMP, that is energically less costly than de novo synthesis. This chain is Adenine phosphoribosyltransferase, found in Lactobacillus delbrueckii subsp. bulgaricus (strain ATCC 11842 / DSM 20081 / BCRC 10696 / JCM 1002 / NBRC 13953 / NCIMB 11778 / NCTC 12712 / WDCM 00102 / Lb 14).